A 427-amino-acid chain; its full sequence is Indole diterpene prenyltransferase ptmD (427 aa).

Residue 77-78 participates in L-tryptophan binding; sequence YV. Positions 99, 186, 188, 259, 261, 263, 344, 409, and 413 each coordinate substrate.

The protein belongs to the tryptophan dimethylallyltransferase family.

It participates in secondary metabolite biosynthesis. Indole diterpene prenyltransferase; part of the gene cluster that mediates the biosynthesis of the indole diterpenes penitrems. The geranylgeranyl diphosphate (GGPP) synthase ptmG catalyzes the first step in penitrem biosynthesis via conversion of farnesyl pyrophosphate and isopentyl pyrophosphate into geranylgeranyl pyrophosphate (GGPP). Condensation of indole-3-glycerol phosphate with GGPP by the prenyl transferase ptmC then forms 3-geranylgeranylindole (3-GGI). Epoxidation by the FAD-dependent monooxygenase ptmM leads to a epoxidized-GGI that is substrate of the terpene cyclase ptmB for cyclization to yield paspaline. Paspaline is subsequently converted to 13-desoxypaxilline by the cytochrome P450 monooxygenase ptmP, the latter being then converted to paxilline by the cytochrome P450 monooxygenase ptmQ. Paxilline is converted to beta-paxitriol via C-10 ketoreduction by the short-chain dehydrogenase ptmH which can be monoprenylated at the C-20 by the indole diterpene prenyltransferase ptmD. A two-step elimination (acetylation and elimination) process performed by the O-acetyltransferase ptmV and ptmI leads to the production of the prenylated form of penijanthine. The FAD-linked oxidoreductase ptmO then converts the prenylated form of penijanthine into PC-M5 which is in turn transformed into PC-M4 by the aromatic dimethylallyltransferase ptmE. Five sequential oxidative transformations performed by the cytochrome P450 monooxygenases ptmK, ptmU, ptmL, ptmN and ptmJ yield the various penitrem compounds. PtmK, ptmU and ptmM are involved in the formation of the key bicyclic ring of penitrem C via the formation of the intermediates secopenitrem D and penitrem D. PtmL catalyzes the epoxidation of penitrem D and C to yield penitrem B and F, respectively. PtmJ catalyzes the last benzylic hydroxylation to convert penitrem B to prenitrem E and penitrem F to penitrem A. The chain is Indole diterpene prenyltransferase ptmD from Penicillium ochrochloron.